Consider the following 48-residue polypeptide: Small, acid-soluble spore protein P (48 aa).

A compositionally biased stretch (basic and acidic residues) spans 1–19 (MTNKNTGKDIRQNSPKEHQ). Residues 1-48 (MTNKNTGKDIRQNSPKEHQSGQPEPLSGSKKVKNRNHTRQKHNSHHDM) are disordered. Over residues 30-48 (KKVKNRNHTRQKHNSHHDM) the composition is skewed to basic residues.

The protein belongs to the SspP family.

The protein resides in the spore core. The protein is Small, acid-soluble spore protein P of Bacillus pumilus (strain SAFR-032).